The sequence spans 379 residues: Polycomb group protein FIE2 (379 aa).

6 WD repeats span residues 85 to 128 (DKDE…LAKS), 131 to 171 (GHGD…CILI), 177 to 217 (GHRN…LYVD), 243 to 280 (VHSN…QSPG), 292 to 333 (VPEC…PVLI), and 340 to 378 (QCKS…PSSR).

The protein belongs to the WD repeat ESC family. As to expression, widely expressed. Expressed in the embryo sac before pollination. After pollination, its expression persists, predominantly in the embryo and at lower levels in the endosperm.

Its subcellular location is the nucleus. Functionally, polycomb group (PcG) protein. PcG proteins act by forming multiprotein complexes, which are required to maintain the transcriptionally repressive state of homeotic genes throughout development. PcG proteins are not required to initiate repression, but to maintain it during later stages of development. They probably act via the methylation of histones, rendering chromatin heritably changed in its expressibility. The protein is Polycomb group protein FIE2 (FIE2) of Zea mays (Maize).